Reading from the N-terminus, the 221-residue chain is PKHD-type hydroxylase PMT9312_1262 (221 aa).

The 95-residue stretch at 80–174 (IIHGIMFTKS…RLVCVGWIES (95 aa)) folds into the Fe2OG dioxygenase domain. 3 residues coordinate Fe cation: H98, D100, and H155. R165 is a binding site for 2-oxoglutarate.

Fe(2+) serves as cofactor. L-ascorbate is required as a cofactor.

This is PKHD-type hydroxylase PMT9312_1262 from Prochlorococcus marinus (strain MIT 9312).